We begin with the raw amino-acid sequence, 232 residues long: Large ribosomal subunit protein uL1 (232 aa).

It belongs to the universal ribosomal protein uL1 family. Part of the 50S ribosomal subunit.

Its function is as follows. Binds directly to 23S rRNA. The L1 stalk is quite mobile in the ribosome, and is involved in E site tRNA release. In terms of biological role, protein L1 is also a translational repressor protein, it controls the translation of the L11 operon by binding to its mRNA. The protein is Large ribosomal subunit protein uL1 of Lysinibacillus sphaericus (strain C3-41).